We begin with the raw amino-acid sequence, 96 residues long: Large ribosomal subunit protein uL23 (96 aa).

It belongs to the universal ribosomal protein uL23 family. In terms of assembly, part of the 50S ribosomal subunit. Contacts protein L29, and trigger factor when it is bound to the ribosome.

Its function is as follows. One of the early assembly proteins it binds 23S rRNA. One of the proteins that surrounds the polypeptide exit tunnel on the outside of the ribosome. Forms the main docking site for trigger factor binding to the ribosome. This Bacillus cytotoxicus (strain DSM 22905 / CIP 110041 / 391-98 / NVH 391-98) protein is Large ribosomal subunit protein uL23.